A 172-amino-acid polypeptide reads, in one-letter code: Protein-export protein SecB (172 aa).

It belongs to the SecB family. Homotetramer, a dimer of dimers. One homotetramer interacts with 1 SecA dimer.

The protein localises to the cytoplasm. One of the proteins required for the normal export of preproteins out of the cell cytoplasm. It is a molecular chaperone that binds to a subset of precursor proteins, maintaining them in a translocation-competent state. It also specifically binds to its receptor SecA. This Xylella fastidiosa (strain Temecula1 / ATCC 700964) protein is Protein-export protein SecB.